We begin with the raw amino-acid sequence, 160 residues long: Endoribonuclease YbeY (160 aa).

Residues H125, H129, and H135 each coordinate Zn(2+).

It belongs to the endoribonuclease YbeY family. Zn(2+) is required as a cofactor.

It is found in the cytoplasm. Its function is as follows. Single strand-specific metallo-endoribonuclease involved in late-stage 70S ribosome quality control and in maturation of the 3' terminus of the 16S rRNA. This Leuconostoc mesenteroides subsp. mesenteroides (strain ATCC 8293 / DSM 20343 / BCRC 11652 / CCM 1803 / JCM 6124 / NCDO 523 / NBRC 100496 / NCIMB 8023 / NCTC 12954 / NRRL B-1118 / 37Y) protein is Endoribonuclease YbeY.